Reading from the N-terminus, the 364-residue chain is Medium-wave-sensitive opsin 2 (364 aa).

Residues 1–23 are disordered; sequence MAQQWSLQRLAGRHPQDSYEDST. Over 1 to 52 the chain is Extracellular; that stretch reads MAQQWSLQRLAGRHPQDSYEDSTQSSIFTYTNSNSTRGPFEGPNYHIAPRWV. The segment at 17 to 43 is required for 11-cis-retinal regeneration; sequence DSYEDSTQSSIFTYTNSNSTRGPFEGP. The N-linked (GlcNAc...) asparagine glycan is linked to Asn-34. The chain crosses the membrane as a helical span at residues 53–77; that stretch reads YHLTSVWMIFVVIASVFTNGLVLAA. At 78-89 the chain is on the cytoplasmic side; the sequence is TMKFKKLRHPLN. A helical membrane pass occupies residues 90–115; that stretch reads WILVNLAVADLAETVIASTISVVNQV. The Extracellular segment spans residues 116 to 129; the sequence is YGYFVLGHPMCVLE. Cysteines 126 and 203 form a disulfide. The helical transmembrane segment at 130–149 threads the bilayer; that stretch reads GYTVSLCGITGLWSLAIISW. The Cytoplasmic portion of the chain corresponds to 150 to 168; that stretch reads ERWMVVCKPFGNVRFDAKL. Residues 169-192 traverse the membrane as a helical segment; sequence AIVGIAFSWIWAAVWTAPPIFGWS. Residues 193 to 218 are Extracellular-facing; it reads RYWPHGLKTSCGPDVFSGSSYPGVQS. A helical membrane pass occupies residues 219–246; that stretch reads YMIVLMVTCCITPLSIIVLCYLQVWLAI. The Cytoplasmic segment spans residues 247–268; sequence RAVAKQQKESESTQKAEKEVTR. The helical transmembrane segment at 269–292 threads the bilayer; sequence MVVVMVLAFCFCWGPYAFFACFAA. Over 293-300 the chain is Extracellular; the sequence is ANPGYPFH. A helical membrane pass occupies residues 301 to 325; it reads PLMAALPAFFAKSATIYNPVIYVFM. The residue at position 312 (Lys-312) is an N6-(retinylidene)lysine. Topologically, residues 326-364 are cytoplasmic; it reads NRQFRNCILQLFGKKVDDGSELSSASKTEVSSVSSVSPA.

The protein belongs to the G-protein coupled receptor 1 family. Opsin subfamily. Post-translationally, N-glycosylated. O-glycosylated. In terms of processing, phosphorylated on some or all of the serine and threonine residues present in the C-terminal region.

It localises to the cell membrane. In terms of biological role, visual pigments are the light-absorbing molecules that mediate vision. They consist of an apoprotein, opsin, covalently linked to cis-retinal. This chain is Medium-wave-sensitive opsin 2, found in Homo sapiens (Human).